A 116-amino-acid polypeptide reads, in one-letter code: uncharacterized protein (116 aa).

A helical transmembrane segment spans residues 52–72 (VFCSANSVPLYLLLLTSALHF).

The protein localises to the mitochondrion membrane. This is an uncharacterized protein from Arabidopsis thaliana (Mouse-ear cress).